Consider the following 719-residue polypeptide: Disintegrin and metalloproteinase domain-containing protein 18 (719 aa).

The signal sequence occupies residues 1–19 (MPLLFILAELAMLFARLDS). A propeptide spanning residues 20 to 179 (EGICLHITVP…QDKNHSQLLP (160 aa)) is cleaved from the precursor. N-linked (GlcNAc...) asparagine glycans are attached at residues asparagine 61, asparagine 75, asparagine 121, asparagine 152, asparagine 173, asparagine 244, and asparagine 331. Over 173 to 683 (NHSQLLPQSL…TKRLSKNEDS (511 aa)) the chain is Extracellular. A Peptidase M12B domain is found at 180–378 (QSLKLHIIVG…FDTQCLGDLS (199 aa)). Disulfide bonds link cysteine 289/cysteine 373, cysteine 332/cysteine 357, and cysteine 334/cysteine 339. 2 N-linked (GlcNAc...) asparagine glycosylation sites follow: asparagine 356 and asparagine 405. Residues 387–476 (QAVCGNGIME…HCVPDTFALN (90 aa)) enclose the Disintegrin domain. Cysteine 447 and cysteine 468 form a disulfide bridge. Asparagine 607, asparagine 614, and asparagine 621 each carry an N-linked (GlcNAc...) asparagine glycan. Residues 616–650 (TGNDCNATKKCKGNGICNNFGNCQCFPDYRPPDCN) enclose the EGF-like domain. Cystine bridges form between cysteine 620–cysteine 632, cysteine 626–cysteine 638, and cysteine 640–cysteine 649. A helical membrane pass occupies residues 684–704 (WVILGFFIFLPFIVTFLVGIM). Residues 705-719 (KRNERKIVPQGEHKI) lie on the Cytoplasmic side of the membrane.

In terms of processing, the prodomain and the metalloprotease-like domain are cleaved during the epididymal maturation of the spermatozoa. As to expression, expressed specifically in testis.

It localises to the membrane. Its function is as follows. Sperm surface membrane protein that may be involved in spermatogenesis and fertilization. This is a non catalytic metalloprotease-like protein. The polypeptide is Disintegrin and metalloproteinase domain-containing protein 18 (Adam18) (Mus musculus (Mouse)).